The chain runs to 121 residues: Ribosome-binding factor A (121 aa).

This sequence belongs to the RbfA family. As to quaternary structure, monomer. Binds 30S ribosomal subunits, but not 50S ribosomal subunits or 70S ribosomes.

Its subcellular location is the cytoplasm. Functionally, one of several proteins that assist in the late maturation steps of the functional core of the 30S ribosomal subunit. Associates with free 30S ribosomal subunits (but not with 30S subunits that are part of 70S ribosomes or polysomes). Required for efficient processing of 16S rRNA. May interact with the 5'-terminal helix region of 16S rRNA. This chain is Ribosome-binding factor A, found in Lactobacillus acidophilus (strain ATCC 700396 / NCK56 / N2 / NCFM).